The primary structure comprises 351 residues: Phosphate acyltransferase (351 aa).

It belongs to the PlsX family. Homodimer. Probably interacts with PlsY.

The protein localises to the cytoplasm. The enzyme catalyses a fatty acyl-[ACP] + phosphate = an acyl phosphate + holo-[ACP]. Its pathway is lipid metabolism; phospholipid metabolism. Its function is as follows. Catalyzes the reversible formation of acyl-phosphate (acyl-PO(4)) from acyl-[acyl-carrier-protein] (acyl-ACP). This enzyme utilizes acyl-ACP as fatty acyl donor, but not acyl-CoA. This is Phosphate acyltransferase from Paramagnetospirillum magneticum (strain ATCC 700264 / AMB-1) (Magnetospirillum magneticum).